The sequence spans 295 residues: Deoxyuridine 5'-triphosphate nucleotidohydrolase (295 aa).

Arg178–Gly180 contributes to the substrate binding site. Residues Asn260–Val272 are compositionally biased toward basic and acidic residues. Residues Asn260 to Phe295 form a disordered region.

The protein belongs to the dUTPase family. Requires Mg(2+) as cofactor.

The catalysed reaction is dUTP + H2O = dUMP + diphosphate + H(+). In terms of biological role, involved in nucleotide metabolism: produces dUMP, the immediate precursor of thymidine nucleotides and decreases the intracellular concentration of dUTP to avoid uracil incorporation into viral DNA. In Human herpesvirus 8 type P (isolate GK18) (HHV-8), this protein is Deoxyuridine 5'-triphosphate nucleotidohydrolase.